Reading from the N-terminus, the 236-residue chain is 2,3,4,5-tetrahydropyridine-2,6-dicarboxylate N-acetyltransferase (236 aa).

It belongs to the transferase hexapeptide repeat family. DapH subfamily.

It catalyses the reaction (S)-2,3,4,5-tetrahydrodipicolinate + acetyl-CoA + H2O = L-2-acetamido-6-oxoheptanedioate + CoA. The protein operates within amino-acid biosynthesis; L-lysine biosynthesis via DAP pathway; LL-2,6-diaminopimelate from (S)-tetrahydrodipicolinate (acetylase route): step 1/3. In terms of biological role, catalyzes the transfer of an acetyl group from acetyl-CoA to tetrahydrodipicolinate. The protein is 2,3,4,5-tetrahydropyridine-2,6-dicarboxylate N-acetyltransferase of Listeria ivanovii.